We begin with the raw amino-acid sequence, 266 residues long: MICOS complex subunit MIC27 (266 aa).

The N-terminal 27 residues, 1–27, are a transit peptide targeting the mitochondrion; sequence MAAIRMGKLTTMPAGLIYASVSVHAAK. Residues 28–110 are Mitochondrial intermembrane-facing; it reads EEESKKQLVK…YVYMKNPPRD (83 aa). A helical transmembrane segment spans residues 111 to 129; the sequence is FLPKMGVITVSGLAGLVSA. At 130-137 the chain is on the mitochondrial matrix side; sequence RKGSKFKK. Residues 138–155 form a helical membrane-spanning segment; that stretch reads ITYPLGLATLGATVCYPV. The Mitochondrial intermembrane portion of the chain corresponds to 156–266; sequence QSVIIAKVTA…NVTNSGVLRI (111 aa). Phosphoserine is present on Ser-204.

It belongs to the apolipoprotein O/MICOS complex subunit Mic27 family. In terms of assembly, component of the mitochondrial contact site and cristae organizing system (MICOS) complex, composed of at least MICOS10/MIC10, CHCHD3/MIC19, CHCHD6/MIC25, APOOL/MIC27, IMMT/MIC60, APOO/MIC23/MIC26 and MICOS13/MIC13. This complex was also known under the names MINOS or MitOS complex. The MICOS complex associates with mitochondrial outer membrane proteins SAMM50, MTX1 and MTX2 (together described as components of the mitochondrial outer membrane sorting assembly machinery (SAM) complex) and DNAJC11, mitochondrial inner membrane protein TMEM11 and with HSPA9. The MICOS and SAM complexes together with DNAJC11 are part of a large protein complex spanning both membranes termed the mitochondrial intermembrane space bridging (MIB) complex. Interacts with MICOS10/MIC10, IMMT/MIC60 and APOO/MIC23/MIC26.

The protein resides in the mitochondrion inner membrane. It is found in the mitochondrion. Functionally, component of the MICOS complex, a large protein complex of the mitochondrial inner membrane that plays crucial roles in the maintenance of crista junctions, inner membrane architecture, and formation of contact sites to the outer membrane. Specifically binds to cardiolipin (in vitro) but not to the precursor lipid phosphatidylglycerol. Plays a crucial role in crista junction formation and mitochondrial function. The chain is MICOS complex subunit MIC27 (APOOL) from Pongo abelii (Sumatran orangutan).